Consider the following 573-residue polypeptide: Proline--tRNA ligase (573 aa).

It belongs to the class-II aminoacyl-tRNA synthetase family. ProS type 1 subfamily. In terms of assembly, homodimer.

It localises to the cytoplasm. The enzyme catalyses tRNA(Pro) + L-proline + ATP = L-prolyl-tRNA(Pro) + AMP + diphosphate. Functionally, catalyzes the attachment of proline to tRNA(Pro) in a two-step reaction: proline is first activated by ATP to form Pro-AMP and then transferred to the acceptor end of tRNA(Pro). As ProRS can inadvertently accommodate and process non-cognate amino acids such as alanine and cysteine, to avoid such errors it has two additional distinct editing activities against alanine. One activity is designated as 'pretransfer' editing and involves the tRNA(Pro)-independent hydrolysis of activated Ala-AMP. The other activity is designated 'posttransfer' editing and involves deacylation of mischarged Ala-tRNA(Pro). The misacylated Cys-tRNA(Pro) is not edited by ProRS. This Cupriavidus necator (strain ATCC 17699 / DSM 428 / KCTC 22496 / NCIMB 10442 / H16 / Stanier 337) (Ralstonia eutropha) protein is Proline--tRNA ligase.